Consider the following 353-residue polypeptide: Photosystem II protein D1 (353 aa).

T2 is modified (N-acetylthreonine). T2 is subject to Phosphothreonine. 3 helical membrane-spanning segments follow: residues 29 to 46 (YIGW…TATS), 118 to 133 (HFLL…EWEL), and 142 to 156 (WIAV…AAAA). Residue H118 coordinates chlorophyll a. Position 126 (Y126) interacts with pheophytin a. [CaMn4O5] cluster contacts are provided by D170 and E189. The helical transmembrane segment at 197–218 (FHMLGVAGVFGGSLFSAMHGSL) threads the bilayer. A chlorophyll a-binding site is contributed by H198. Residues H215 and 264 to 265 (SF) each bind a quinone. Position 215 (H215) interacts with Fe cation. H272 is a binding site for Fe cation. Residues 274–288 (FLAAWPVVGIWFTAL) form a helical membrane-spanning segment. The [CaMn4O5] cluster site is built by H332, E333, D342, and A344. A propeptide spanning residues 345–353 (SVDAPSING) is cleaved from the precursor.

Belongs to the reaction center PufL/M/PsbA/D family. In terms of assembly, PSII is composed of 1 copy each of membrane proteins PsbA, PsbB, PsbC, PsbD, PsbE, PsbF, PsbH, PsbI, PsbJ, PsbK, PsbL, PsbM, PsbT, PsbX, PsbY, PsbZ, Psb30/Ycf12, at least 3 peripheral proteins of the oxygen-evolving complex and a large number of cofactors. It forms dimeric complexes. The D1/D2 heterodimer binds P680, chlorophylls that are the primary electron donor of PSII, and subsequent electron acceptors. It shares a non-heme iron and each subunit binds pheophytin, quinone, additional chlorophylls, carotenoids and lipids. D1 provides most of the ligands for the Mn4-Ca-O5 cluster of the oxygen-evolving complex (OEC). There is also a Cl(-1) ion associated with D1 and D2, which is required for oxygen evolution. The PSII complex binds additional chlorophylls, carotenoids and specific lipids. serves as cofactor. In terms of processing, tyr-161 forms a radical intermediate that is referred to as redox-active TyrZ, YZ or Y-Z. Post-translationally, C-terminally processed by CTPA; processing is essential to allow assembly of the oxygen-evolving complex and thus photosynthetic growth.

Its subcellular location is the plastid. It localises to the chloroplast thylakoid membrane. It catalyses the reaction 2 a plastoquinone + 4 hnu + 2 H2O = 2 a plastoquinol + O2. Photosystem II (PSII) is a light-driven water:plastoquinone oxidoreductase that uses light energy to abstract electrons from H(2)O, generating O(2) and a proton gradient subsequently used for ATP formation. It consists of a core antenna complex that captures photons, and an electron transfer chain that converts photonic excitation into a charge separation. The D1/D2 (PsbA/PsbD) reaction center heterodimer binds P680, the primary electron donor of PSII as well as several subsequent electron acceptors. The polypeptide is Photosystem II protein D1 (Adiantum capillus-veneris (Maidenhair fern)).